A 223-amino-acid polypeptide reads, in one-letter code: Homeobox protein egl-5 (223 aa).

Positions 1–25 (MNTSTSAFDFGSSTASSAATSTTSS) are enriched in low complexity. Disordered regions lie at residues 1-58 (MNTS…STEA) and 168-191 (KKEKQRVDDHTEHTPLLPANPPKG). The homeobox DNA-binding region spans 112-171 (SKKGRQTYQRYQTSVLEAKFQQSSYVSKKQREELRLQTQLTDRQIKIWFQNRRMKAKKEK).

It belongs to the Abd-B homeobox family. As to quaternary structure, interacts with the TCF transcription factor pop-1.

Its subcellular location is the nucleus. Involved in control of cell fate and pattern formation along the anterior-posterior axis, acting mainly in the tail. Required during embryonic and postembryonic development. Essential for the determination of specific neurons, including the PLM touch neurons. Plays a role in neural fate specification in the hermaphrodite-specific neuron (HSN)/PHB neuron lineage, acting in concert with T-box protein tbx-2 and the asymmetric cell division protein ham-1. Required for male gonadal fate determination, acting in parallel with a WNT/beta-catenin pathway, perhaps by recruiting pop-1 to male-specific gonadal target genes. Involved in development of the hermaphrodite hindgut, and for the response to rectal infection by the coryneform bacterium M.nematophilum. This chain is Homeobox protein egl-5, found in Caenorhabditis elegans.